The following is a 102-amino-acid chain: MRYGFVRKKHRGLFLTTVAALPIWNPISEFVKWYKSHKLSQHCIRICGHLCQKHLDMFLSVIGQRWPIDVFSSVFDHQVSAIGSDIIWWFLKLFLVSFFFFF.

2 helical membrane passes run 13 to 33 and 82 to 102; these read LFLT…FVKW and IGSD…FFFF.

Expressed in placenta with lower expression in brain, kidney and testis.

It is found in the endoplasmic reticulum membrane. This Homo sapiens (Human) protein is Protein PAPPAS (PAPPA-AS1).